The primary structure comprises 223 residues: Small ribosomal subunit protein uS5 (223 aa).

A disordered region spans residues 1-48 (MPGRQRRDGGSGPAGQNGPNSGDNSNARGDNRGGGRDRRDGGRGGNAA). The span at 29-42 (GDNRGGGRDRRDGG) shows a compositional bias: basic and acidic residues. The S5 DRBM domain maps to 53–116 (FIERVVTINR…EEARKSFFRV (64 aa)).

The protein belongs to the universal ribosomal protein uS5 family. In terms of assembly, part of the 30S ribosomal subunit. Contacts proteins S4 and S8.

Functionally, with S4 and S12 plays an important role in translational accuracy. Its function is as follows. Located at the back of the 30S subunit body where it stabilizes the conformation of the head with respect to the body. This Rhodococcus erythropolis (strain PR4 / NBRC 100887) protein is Small ribosomal subunit protein uS5.